The sequence spans 150 residues: UPF0756 membrane protein YE1142 (150 aa).

4 helical membrane-spanning segments follow: residues 1–21 (MAAL…GIIS), 51–71 (YGLT…IASG), 88–108 (ILAI…VSLM), and 114–134 (VVAG…GVPV).

The protein belongs to the UPF0756 family.

Its subcellular location is the cell membrane. In Yersinia enterocolitica serotype O:8 / biotype 1B (strain NCTC 13174 / 8081), this protein is UPF0756 membrane protein YE1142.